The chain runs to 1444 residues: DNA polymerase III PolC-type (1444 aa).

An Exonuclease domain is found at 421–577; the sequence is YVVFDVETTG…ADAEATGYLL (157 aa).

The protein belongs to the DNA polymerase type-C family. PolC subfamily.

The protein resides in the cytoplasm. The catalysed reaction is DNA(n) + a 2'-deoxyribonucleoside 5'-triphosphate = DNA(n+1) + diphosphate. Required for replicative DNA synthesis. This DNA polymerase also exhibits 3' to 5' exonuclease activity. This chain is DNA polymerase III PolC-type, found in Lacticaseibacillus paracasei (strain ATCC 334 / BCRC 17002 / CCUG 31169 / CIP 107868 / KCTC 3260 / NRRL B-441) (Lactobacillus paracasei).